Reading from the N-terminus, the 153-residue chain is Putative adenylate kinase (153 aa).

5 residues coordinate ATP: glycine 12, glycine 14, lysine 15, serine 16, and threonine 17. An NMP region spans residues glutamate 31–valine 47. The interval alanine 94–glutamate 104 is LID. Arginine 95 serves as a coordination point for ATP.

Belongs to the adenylate kinase family. AK6 subfamily. As to quaternary structure, interacts with uS11. Not a structural component of 40S pre-ribosomes, but transiently interacts with them by binding to uS11.

The enzyme catalyses AMP + ATP = 2 ADP. It carries out the reaction ATP + H2O = ADP + phosphate + H(+). Broad-specificity nucleoside monophosphate (NMP) kinase that catalyzes the reversible transfer of the terminal phosphate group between nucleoside triphosphates and monophosphates. Also has ATPase activity. Involved in the late maturation steps of the 30S ribosomal particles, specifically 16S rRNA maturation. While NMP activity is not required for ribosome maturation, ATPase activity is. Associates transiently with small ribosomal subunit protein uS11. ATP hydrolysis breaks the interaction with uS11. May temporarily remove uS11 from the ribosome to enable a conformational change of the ribosomal RNA that is needed for the final maturation step of the small ribosomal subunit. This chain is Putative adenylate kinase, found in Thermoplasma volcanium (strain ATCC 51530 / DSM 4299 / JCM 9571 / NBRC 15438 / GSS1).